Here is a 146-residue protein sequence, read N- to C-terminus: UPF0735 ACT domain-containing protein Cbei_1295 (146 aa).

Positions Thr-70 to Met-145 constitute an ACT domain.

This sequence belongs to the UPF0735 family.

The chain is UPF0735 ACT domain-containing protein Cbei_1295 from Clostridium beijerinckii (strain ATCC 51743 / NCIMB 8052) (Clostridium acetobutylicum).